The chain runs to 133 residues: Putative pre-16S rRNA nuclease (133 aa).

This sequence belongs to the YqgF nuclease family.

Its subcellular location is the cytoplasm. In terms of biological role, could be a nuclease involved in processing of the 5'-end of pre-16S rRNA. The protein is Putative pre-16S rRNA nuclease of Bordetella bronchiseptica (strain ATCC BAA-588 / NCTC 13252 / RB50) (Alcaligenes bronchisepticus).